The sequence spans 351 residues: Histidinol-phosphate aminotransferase 1 (351 aa).

Position 210 is an N6-(pyridoxal phosphate)lysine (lysine 210).

The protein belongs to the class-II pyridoxal-phosphate-dependent aminotransferase family. Histidinol-phosphate aminotransferase subfamily. As to quaternary structure, homodimer. The cofactor is pyridoxal 5'-phosphate.

It catalyses the reaction L-histidinol phosphate + 2-oxoglutarate = 3-(imidazol-4-yl)-2-oxopropyl phosphate + L-glutamate. Its pathway is amino-acid biosynthesis; L-histidine biosynthesis; L-histidine from 5-phospho-alpha-D-ribose 1-diphosphate: step 7/9. The polypeptide is Histidinol-phosphate aminotransferase 1 (hisC1) (Pseudomonas aeruginosa (strain ATCC 15692 / DSM 22644 / CIP 104116 / JCM 14847 / LMG 12228 / 1C / PRS 101 / PAO1)).